Consider the following 440-residue polypeptide: MGDWSFLGNILEEVNEHSTVIGRVWLTVLFIFRILILGTAAEFVWGDEQSDFVCNTQQPGCENVCYDEAFPISHIRLWVLQIIFVSTPSLMYVGHAVHHVRMEEKRKDREAEELCQQSRSNGGERVPIAPDQASIRKSSSSSKGTKKFRLEGTLLRTYVCHIIFKTLFEVGFIVGHYFLYGFRILPLYRCSRWPCPNVVDCFVSRPTEKTIFILFMLSVAFVSLFLNIMEMSHLGMKGIRSAFKRPVEQPLGEIAEKSLHSIAVSSIQKAKGYQLLEEEKIVSHYFPLTEVGMVETSPLSAKPFSQFEEKIGTGPLADMSRSYQETLPSYAQVGVQEVEREEPPIEEAVEPEVGEKKQEAEKVAPEGQETVAVPDRERVETPGVGKEDEKEELQAEKVTKQGLSAEKAPSLCPELTTDDNRPLSRLSKASSRARSDDLTI.

Residues 2–12 (GDWSFLGNILE) lie within the membrane without spanning it. Residues 13 to 21 (EVNEHSTVI) lie on the Cytoplasmic side of the membrane. Residues 22–42 (GRVWLTVLFIFRILILGTAAE) form a helical membrane-spanning segment. The Extracellular portion of the chain corresponds to 43 to 71 (FVWGDEQSDFVCNTQQPGCENVCYDEAFP). 3 cysteine pairs are disulfide-bonded: Cys54–Cys201, Cys61–Cys195, and Cys65–Cys190. Residues 72 to 92 (ISHIRLWVLQIIFVSTPSLMY) traverse the membrane as a helical segment. Residues 93 to 161 (VGHAVHHVRM…GTLLRTYVCH (69 aa)) are Cytoplasmic-facing. The tract at residues 111-143 (AEELCQQSRSNGGERVPIAPDQASIRKSSSSSK) is disordered. The chain crosses the membrane as a helical span at residues 162–182 (IIFKTLFEVGFIVGHYFLYGF). Over 183 to 210 (RILPLYRCSRWPCPNVVDCFVSRPTEKT) the chain is Extracellular. A helical transmembrane segment spans residues 211–231 (IFILFMLSVAFVSLFLNIMEM). Residues 232 to 440 (SHLGMKGIRS…SRARSDDLTI (209 aa)) are Cytoplasmic-facing. A disordered region spans residues 338-440 (VEREEPPIEE…SRARSDDLTI (103 aa)). Basic and acidic residues-rich tracts occupy residues 353-364 (VGEKKQEAEKVA) and 374-399 (PDRE…EKVT). The segment covering 423 to 432 (LSRLSKASSR) has biased composition (low complexity).

Belongs to the connexin family. Alpha-type (group II) subfamily. A hemichannel or connexon is composed of a hexamer of connexins. A functional gap junction is formed by the apposition of two hemichannels. Forms heteromeric channels with GJA3. Detected in eye lens (at protein level). Eye lens.

The protein localises to the cell membrane. It localises to the cell junction. It is found in the gap junction. Structural component of eye lens gap junctions. Gap junctions are dodecameric channels that connect the cytoplasm of adjoining cells. They are formed by the docking of two hexameric hemichannels, one from each cell membrane. Small molecules and ions diffuse from one cell to a neighboring cell via the central pore. This Mus musculus (Mouse) protein is Gap junction alpha-8 protein (Gja8).